The sequence spans 816 residues: Bifunctional aspartokinase/homoserine dehydrogenase (816 aa).

Residues 1-250 (MKLLKFGGTS…VPNARLLKSI (250 aa)) are aspartokinase. An interface region spans residues 251 to 471 (SYQEAMELSY…FNKKTIHMFL (221 aa)). Residues 402-479 (IVGSNIYKKH…FLIGIGGIGS (78 aa)) form the ACT domain. Residues 472–816 (IGIGGIGSTL…VFSDLLRTLS (345 aa)) form a homoserine dehydrogenase region. Positions 476, 477, and 505 each coordinate NAD(+). Ile477 serves as a coordination point for NADP(+). Ile477 serves as a coordination point for NADPH. The NADP(+) site is built by Lys508 and Thr556. Thr556 contributes to the NAD(+) binding site. Thr556, Ser557, Ser578, and Lys580 together coordinate NADPH. NADP(+)-binding residues include Ser578 and Lys580. Positions 607, 610, 612, and 614 each coordinate Na(+). Positions 665 and 668 each coordinate NADP(+). Residues Glu668 and Asp679 each coordinate L-homoserine. Lys683 (proton donor) is an active-site residue. Residue Gly799 participates in NAD(+) binding. Gly799 serves as a coordination point for NADP(+). Gly799 contacts NADPH.

In the N-terminal section; belongs to the aspartokinase family. The protein in the C-terminal section; belongs to the homoserine dehydrogenase family. As to quaternary structure, homotetramer. Requires a metal cation as cofactor.

The enzyme catalyses L-homoserine + NADP(+) = L-aspartate 4-semialdehyde + NADPH + H(+). It carries out the reaction L-homoserine + NAD(+) = L-aspartate 4-semialdehyde + NADH + H(+). The catalysed reaction is L-aspartate + ATP = 4-phospho-L-aspartate + ADP. It functions in the pathway amino-acid biosynthesis; L-lysine biosynthesis via DAP pathway; (S)-tetrahydrodipicolinate from L-aspartate: step 1/4. The protein operates within amino-acid biosynthesis; L-methionine biosynthesis via de novo pathway; L-homoserine from L-aspartate: step 1/3. Its pathway is amino-acid biosynthesis; L-methionine biosynthesis via de novo pathway; L-homoserine from L-aspartate: step 3/3. It participates in amino-acid biosynthesis; L-threonine biosynthesis; L-threonine from L-aspartate: step 1/5. It functions in the pathway amino-acid biosynthesis; L-threonine biosynthesis; L-threonine from L-aspartate: step 3/5. Its function is as follows. Bifunctional aspartate kinase and homoserine dehydrogenase that catalyzes the first and the third steps toward the synthesis of lysine, methionine and threonine from aspartate. This Buchnera aphidicola subsp. Acyrthosiphon pisum (strain APS) (Acyrthosiphon pisum symbiotic bacterium) protein is Bifunctional aspartokinase/homoserine dehydrogenase (thrA).